Here is a 144-residue protein sequence, read N- to C-terminus: Large ribosomal subunit protein uL16 (144 aa).

The protein belongs to the universal ribosomal protein uL16 family. As to quaternary structure, part of the 50S ribosomal subunit.

Functionally, binds 23S rRNA and is also seen to make contacts with the A and possibly P site tRNAs. This Pediococcus pentosaceus (strain ATCC 25745 / CCUG 21536 / LMG 10740 / 183-1w) protein is Large ribosomal subunit protein uL16.